We begin with the raw amino-acid sequence, 529 residues long: AAA ATPase forming ring-shaped complexes (529 aa).

The stretch at 15–62 forms a coiled coil; that stretch reads MERQDERLRSLSEANDRLMAKNHALAKALTRATQELTKAKAQLNQLAG. An ATP-binding site is contributed by 253–258; it reads GNGKTL.

It belongs to the AAA ATPase family. In terms of assembly, homohexamer. Assembles into a hexameric ring structure.

The chain is AAA ATPase forming ring-shaped complexes from Bifidobacterium dentium (strain ATCC 27534 / DSM 20436 / JCM 1195 / Bd1).